Consider the following 523-residue polypeptide: Tyrosine/DOPA decarboxylase 5 (523 aa).

Positions 1–19 (MGSLPTDNLESMSICSQNP) are enriched in polar residues. Disordered stretches follow at residues 1–20 (MGSL…QNPL) and 47–66 (SRSQ…APNH). The residue at position 321 (Lys321) is an N6-(pyridoxal phosphate)lysine.

Belongs to the group II decarboxylase family. As to quaternary structure, homodimer. It depends on pyridoxal 5'-phosphate as a cofactor. As to expression, roots.

It carries out the reaction L-tyrosine + H(+) = tyramine + CO2. The catalysed reaction is L-dopa + H(+) = dopamine + CO2. The enzyme catalyses 5-hydroxy-L-tryptophan + H(+) = serotonin + CO2. May play an important role in providing precursors for alkaloid synthesis in the roots and germinating seedlings. The chain is Tyrosine/DOPA decarboxylase 5 (TYDC5) from Papaver somniferum (Opium poppy).